Reading from the N-terminus, the 156-residue chain is MPRRGPVTPREIPPDPVYNSVLVQKLINKVMLDGKKSIAEKIVYGAMEIIREKTKQDPLVVLEKAVQNVTPLLEVRPRRVGGATYQVPIEVPPRRGLSLALRWIVRAARERKGMPMKERLALEILDALNNTGGAIKKRDEMHRMAEANKAFAHYRW.

It belongs to the universal ribosomal protein uS7 family. In terms of assembly, part of the 30S ribosomal subunit. Contacts proteins S9 and S11.

Its function is as follows. One of the primary rRNA binding proteins, it binds directly to 16S rRNA where it nucleates assembly of the head domain of the 30S subunit. Is located at the subunit interface close to the decoding center, probably blocks exit of the E-site tRNA. The protein is Small ribosomal subunit protein uS7 of Dictyoglomus thermophilum (strain ATCC 35947 / DSM 3960 / H-6-12).